We begin with the raw amino-acid sequence, 318 residues long: UPF0725 protein At3g44770 (318 aa).

The protein belongs to the UPF0725 (EMB2204) family.

The polypeptide is UPF0725 protein At3g44770 (Arabidopsis thaliana (Mouse-ear cress)).